Consider the following 603-residue polypeptide: UvrABC system protein C (603 aa).

Residues 15 to 92 (DQPGCYLMKN…IQKHQPYYNI (78 aa)) enclose the GIY-YIG domain. The 36-residue stretch at 197–232 (AQVKKQLTARMERAAGQLEFERAAEIRDQLHYIEVT) folds into the UVR domain.

Belongs to the UvrC family. Interacts with UvrB in an incision complex.

The protein resides in the cytoplasm. The UvrABC repair system catalyzes the recognition and processing of DNA lesions. UvrC both incises the 5' and 3' sides of the lesion. The N-terminal half is responsible for the 3' incision and the C-terminal half is responsible for the 5' incision. In Limosilactobacillus fermentum (strain NBRC 3956 / LMG 18251) (Lactobacillus fermentum), this protein is UvrABC system protein C.